Consider the following 461-residue polypeptide: Asparagine--tRNA ligase (461 aa).

Belongs to the class-II aminoacyl-tRNA synthetase family. Homodimer.

The protein resides in the cytoplasm. The catalysed reaction is tRNA(Asn) + L-asparagine + ATP = L-asparaginyl-tRNA(Asn) + AMP + diphosphate + H(+). The chain is Asparagine--tRNA ligase from Solibacter usitatus (strain Ellin6076).